The following is a 307-amino-acid chain: Low-salt glycan biosynthesis hexosyltransferase Agl10 (307 aa).

It belongs to the glycosyltransferase 2 family.

The protein operates within protein modification; protein glycosylation. Its pathway is cell surface structure biogenesis; S-layer biogenesis. Functionally, hexosyltransferase involved in N-glycan biosynthetic pathway that takes place under low-salt conditions (1.75 M instead of 3.4 M). Participates in the formation of the tetrasaccharide present at 'Asn-532' of S-layer glycoprotein Csg, consisting of a sulfated hexose, 2 hexoses and rhamnose. Involved in the addition of final rhamnose (sugar 4) of the tetrasaccharide on the dolichol phosphate carrier. The sequence is that of Low-salt glycan biosynthesis hexosyltransferase Agl10 (agl10) from Haloferax volcanii (strain ATCC 29605 / DSM 3757 / JCM 8879 / NBRC 14742 / NCIMB 2012 / VKM B-1768 / DS2) (Halobacterium volcanii).